Consider the following 401-residue polypeptide: MNQNNKHRTLLFRAALAAIAIAAAIFFWYQLKTPQQSSPSDQSSGLRHSPLPPVQVATAKEQAVPRFLAGLGTIQAANTATVTSRVEGQLIALHFQEGQQIKQGDLLAEIDPRPFQVQLAQAKGQLAKDEAILANARQDLNRYQKLANTHLISQQEMDNQRALVRQHEASLKVDQAAIDSAKLQLTYSRITAPISGKVGLKQIDVGNFISSGNSSSIVVITQTDPVDVLFSLPENDINAVLQAQKTNHDVVVSAWDRNNQQQLAAGKLLSIDNQIDATTGTIKLKARFSNQESILFPNQFVNVRIKVDTLENAVVIPNAALQMGNEGNFVWMLGKENKVSKHLVTVKLQDTKRVVISAGLAAGDKVVTDGIDRLTDGAKVDIVTPMVNKPQPQKHDQTENS.

The N-terminal stretch at 1-20 is a signal peptide; it reads MNQNNKHRTLLFRAALAAIA.

Belongs to the membrane fusion protein (MFP) (TC 8.A.1) family. In terms of assembly, part of a tripartite efflux system composed of MdtA, MdtB and MdtC.

The protein resides in the cell inner membrane. In Photorhabdus laumondii subsp. laumondii (strain DSM 15139 / CIP 105565 / TT01) (Photorhabdus luminescens subsp. laumondii), this protein is Multidrug resistance protein MdtA.